We begin with the raw amino-acid sequence, 123 residues long: MARIGGVNVPVDKRVVVALTYIYGIGTSLANRICEGCGIDKNVRVSALSEEDVVKIRNFIRAGCVVEADLRKEVAMNIKFLMDIGCYRGLRHRKKLPVRGQRTHTNARTRKGGSRLAVAAKKK.

Residues R99–G113 are compositionally biased toward basic residues. Residues R99–K123 form a disordered region.

It belongs to the universal ribosomal protein uS13 family. As to quaternary structure, part of the 30S ribosomal subunit. Forms a loose heterodimer with protein S19. Forms two bridges to the 50S subunit in the 70S ribosome.

In terms of biological role, located at the top of the head of the 30S subunit, it contacts several helices of the 16S rRNA. In the 70S ribosome it contacts the 23S rRNA (bridge B1a) and protein L5 of the 50S subunit (bridge B1b), connecting the 2 subunits; these bridges are implicated in subunit movement. Contacts the tRNAs in the A and P-sites. This Anaplasma phagocytophilum (strain HZ) protein is Small ribosomal subunit protein uS13.